The chain runs to 201 residues: MTDRDRQPEDTTAPTGEPVVSKPYIMPDDPEPGSVELLQKEAAEARDRMLRTLAEMENLRKRTTKEVADARLYGITGFARDVLDIADNLQRALDAVPAEARAAADPGLTSLIEGVELTERSLLNALEKHGVKKFDPQGQKFDPNFQQAMFEVPDASVPAGTVVQVMQAGYTIGERVLRPALVGVAKGGAKAASAANSNEVN.

Residues M1 to P32 form a disordered region.

The protein belongs to the GrpE family. Homodimer.

The protein resides in the cytoplasm. Functionally, participates actively in the response to hyperosmotic and heat shock by preventing the aggregation of stress-denatured proteins, in association with DnaK and GrpE. It is the nucleotide exchange factor for DnaK and may function as a thermosensor. Unfolded proteins bind initially to DnaJ; upon interaction with the DnaJ-bound protein, DnaK hydrolyzes its bound ATP, resulting in the formation of a stable complex. GrpE releases ADP from DnaK; ATP binding to DnaK triggers the release of the substrate protein, thus completing the reaction cycle. Several rounds of ATP-dependent interactions between DnaJ, DnaK and GrpE are required for fully efficient folding. In Bradyrhizobium diazoefficiens (strain JCM 10833 / BCRC 13528 / IAM 13628 / NBRC 14792 / USDA 110), this protein is Protein GrpE.